A 259-amino-acid polypeptide reads, in one-letter code: Electron transfer flavoprotein subunit beta (259 aa).

The protein belongs to the ETF beta-subunit/FixA family. As to quaternary structure, heterodimer of an alpha and a beta subunit. FAD is required as a cofactor. The cofactor is AMP.

The electron transfer flavoprotein serves as a specific electron acceptor for other dehydrogenases. It transfers the electrons to the main respiratory chain via ETF-ubiquinone oxidoreductase (ETF dehydrogenase). In Clostridium acetobutylicum (strain ATCC 824 / DSM 792 / JCM 1419 / IAM 19013 / LMG 5710 / NBRC 13948 / NRRL B-527 / VKM B-1787 / 2291 / W), this protein is Electron transfer flavoprotein subunit beta (etfB).